Reading from the N-terminus, the 122-residue chain is Holo-[acyl-carrier-protein] synthase (122 aa).

The Mg(2+) site is built by D5 and E54.

This sequence belongs to the P-Pant transferase superfamily. AcpS family. It depends on Mg(2+) as a cofactor.

It localises to the cytoplasm. It carries out the reaction apo-[ACP] + CoA = holo-[ACP] + adenosine 3',5'-bisphosphate + H(+). Transfers the 4'-phosphopantetheine moiety from coenzyme A to a Ser of acyl-carrier-protein. In Aquifex aeolicus (strain VF5), this protein is Holo-[acyl-carrier-protein] synthase.